Here is a 230-residue protein sequence, read N- to C-terminus: Prepilin leader peptidase/N-methyltransferase (230 aa).

7 helical membrane passes run 1–21 (MIYF…WFYL), 60–80 (GHIL…QIAF), 84–104 (IFTV…YLDW), 114–134 (CLWL…LLTL), 140–160 (SAAS…FYYG), 181–201 (LETL…FSLI), and 208–228 (FLPF…VKYY).

This sequence belongs to the peptidase A24 family.

The protein localises to the cell inner membrane. The enzyme catalyses Typically cleaves a -Gly-|-Phe- bond to release an N-terminal, basic peptide of 5-8 residues from type IV prepilin, and then N-methylates the new N-terminal amino group, the methyl donor being S-adenosyl-L-methionine.. In terms of biological role, plays a role in type II pseudopili formation by proteolytically removing the leader sequence from substrate proteins and subsequently monomethylating the alpha-amino group of the newly exposed N-terminal phenylalanine. Substrates include proteins required for biogenesis of the type II general secretory apparatus. The polypeptide is Prepilin leader peptidase/N-methyltransferase (hofD) (Haemophilus influenzae (strain ATCC 51907 / DSM 11121 / KW20 / Rd)).